We begin with the raw amino-acid sequence, 284 residues long: Bifunctional protein FolD (284 aa).

Residues 165-167 (GRS), Ser-190, and Val-231 contribute to the NADP(+) site.

Belongs to the tetrahydrofolate dehydrogenase/cyclohydrolase family. In terms of assembly, homodimer.

The enzyme catalyses (6R)-5,10-methylene-5,6,7,8-tetrahydrofolate + NADP(+) = (6R)-5,10-methenyltetrahydrofolate + NADPH. It catalyses the reaction (6R)-5,10-methenyltetrahydrofolate + H2O = (6R)-10-formyltetrahydrofolate + H(+). It functions in the pathway one-carbon metabolism; tetrahydrofolate interconversion. Its function is as follows. Catalyzes the oxidation of 5,10-methylenetetrahydrofolate to 5,10-methenyltetrahydrofolate and then the hydrolysis of 5,10-methenyltetrahydrofolate to 10-formyltetrahydrofolate. The chain is Bifunctional protein FolD from Bacillus licheniformis (strain ATCC 14580 / DSM 13 / JCM 2505 / CCUG 7422 / NBRC 12200 / NCIMB 9375 / NCTC 10341 / NRRL NRS-1264 / Gibson 46).